Here is a 492-residue protein sequence, read N- to C-terminus: Monocarboxylate transporter 3 (492 aa).

The Cytoplasmic segment spans residues 1–14 (MGAGGPRRGAGPPD). Residues 15-35 (GGWGWVVLGACFVVTGFAYGF) traverse the membrane as a helical segment. The Extracellular portion of the chain corresponds to 36 to 58 (PKAVSVFFRELKRDFGAGYSDTA). A helical transmembrane segment spans residues 59-79 (WVSSIMLAMLYGTGPLSSILV). Over 80 to 85 (TRFGCR) the chain is Cytoplasmic. The helical transmembrane segment at 86 to 106 (PVMLAGGLLASAGMILASFAS) threads the bilayer. Over 107–115 (RLVELYLTA) the chain is Extracellular. A helical membrane pass occupies residues 116 to 136 (GVLTGLGLALNFQPSLIMLGL). Residues 137–146 (YFERRRPLAN) are Cytoplasmic-facing. A helical membrane pass occupies residues 147-167 (GLAAAGSPVFLSMLSPLGQLL). Residues 168 to 172 (GERFG) lie on the Extracellular side of the membrane. The chain crosses the membrane as a helical span at residues 173 to 193 (WRGGFLLFGGLLLHCCACGAV). Over 194–228 (MRPPPGPPPRRDPSPHGGPARRRRLLDVAVCTDRA) the chain is Cytoplasmic. A helical transmembrane segment spans residues 229-249 (FVVYVVTKFLMALGLFVPAIL). Residues 250 to 257 (LVNYAKDA) are Extracellular-facing. A helical membrane pass occupies residues 258 to 278 (GVPDAEAAFLLSIVGFVDIVA). The Cytoplasmic portion of the chain corresponds to 279 to 293 (RPACGALAGLGRLRP). Residues 294–314 (HVPYLFSLALLANGLTDLISA) traverse the membrane as a helical segment. Over 315–318 (RARS) the chain is Extracellular. Residues 319–339 (YGTLVAFCIAFGLSYGMVGAL) form a helical membrane-spanning segment. At 340–352 (QFEVLMATVGAPR) the chain is on the cytoplasmic side. The chain crosses the membrane as a helical span at residues 353–373 (FPSALGLVLLVEAVAVLIGPP). At 374–386 (SAGRLVDALKNYE) the chain is on the extracellular side. A helical membrane pass occupies residues 387–407 (IIFYLAGSEVALAGVFMAVTT). Residues 408–492 (YCCLRCSKNI…GGHEARGQKA (85 aa)) lie on the Cytoplasmic side of the membrane. Residues 419 to 492 (SGRSAEGGAS…GGHEARGQKA (74 aa)) form a disordered region. Basolateral sorting signal stretches follow at residues 426–460 (GASD…VLSP) and 461–482 (RAGS…HESI). The span at 476-492 (ELDHESIGGHEARGQKA) shows a compositional bias: basic and acidic residues.

Belongs to the major facilitator superfamily. Monocarboxylate porter (TC 2.A.1.13) family. As to expression, expressed exclusively in retinal pigment epithelium and choroid plexus epithelium.

The protein localises to the basolateral cell membrane. The enzyme catalyses (S)-lactate(in) + H(+)(in) = (S)-lactate(out) + H(+)(out). Its function is as follows. Probable retinal pigment epithelium (RPE)-specific proton-coupled L-lactate transporter. May facilitate transport of lactate and H(+) out of the retina and could therefore play an essential role in maintenance of metabolic and ionic homeostasis of the outer retina. The chain is Monocarboxylate transporter 3 (Slc16a8) from Mus musculus (Mouse).